The chain runs to 259 residues: MATIKEIKELLVTVKELESPIFLELEKDNRSGVQKEISKRKRAIQAELDENLRLESMLSYEKELYKQGLTLIVGIDEVGRGPLAGPVVAAAVILPKNCKIKGLNDSKKIPKKKHLEIFQAVQDQALSIGIGIIDNQVIDQVNIYEATKLAMQEAISQLSPQPEHLLIDAMKLDLPISQTSIIKGDANSLSIAAASIVAKVTRDELMKEYDQQFPGYDFATNAGYGTAKHLEGLTKLGVTPIHRTSFEPVKSLVLGKKES.

Residues 70 to 258 enclose the RNase H type-2 domain; the sequence is TLIVGIDEVG…VKSLVLGKKE (189 aa). A divalent metal cation is bound by residues Asp76, Glu77, and Asp168.

It belongs to the RNase HII family. The cofactor is Mn(2+). Mg(2+) serves as cofactor.

It is found in the cytoplasm. The enzyme catalyses Endonucleolytic cleavage to 5'-phosphomonoester.. Functionally, endonuclease that specifically degrades the RNA of RNA-DNA hybrids. This Streptococcus pneumoniae serotype 2 (strain D39 / NCTC 7466) protein is Ribonuclease HII.